The primary structure comprises 188 residues: Probable manganese efflux pump MntP (188 aa).

A run of 6 helical transmembrane segments spans residues 3–23, 41–61, 66–86, 106–128, 143–163, and 168–188; these read YTAT…ASIG, LIFG…GILA, LEWN…RMII, WLLV…GLAF, ATLI…PMLG, and ILGG…HFHG.

Belongs to the MntP (TC 9.B.29) family.

It is found in the cell inner membrane. Functionally, probably functions as a manganese efflux pump. This Salmonella heidelberg (strain SL476) protein is Probable manganese efflux pump MntP.